We begin with the raw amino-acid sequence, 83 residues long: Exodeoxyribonuclease 7 small subunit (83 aa).

The tract at residues 63–83 (VQNDDGTTGTEPLADTGESGR) is disordered.

The protein belongs to the XseB family. In terms of assembly, heterooligomer composed of large and small subunits.

It localises to the cytoplasm. The catalysed reaction is Exonucleolytic cleavage in either 5'- to 3'- or 3'- to 5'-direction to yield nucleoside 5'-phosphates.. In terms of biological role, bidirectionally degrades single-stranded DNA into large acid-insoluble oligonucleotides, which are then degraded further into small acid-soluble oligonucleotides. In Gluconobacter oxydans (strain 621H) (Gluconobacter suboxydans), this protein is Exodeoxyribonuclease 7 small subunit.